A 105-amino-acid chain; its full sequence is MSNPTRGLQREITLRLGARLVQEGNRLHYLADRASITGKFSDIECRKLDETFPHFILQMESMLTTGELSPHHAHCVTLYHNDLTCEADTLGSCGYVYIAIYPTQR.

It belongs to the CbeA/YafW/YfjZ antitoxin family.

Antitoxin component of a type IV toxin-antitoxin (TA) system. Antitoxin that counteracts the effect of cognate toxin YkfI. It does not seem to bind to the cognate toxin but instead induces toxin loss by an unknown mechanism. Co-overexpression of toxin YkfI and antitoxin YafW leads to formation of elongated cells. This is Antitoxin YafW (yafW) from Escherichia coli (strain K12).